A 326-amino-acid polypeptide reads, in one-letter code: Vascular endothelial growth factor D (326 aa).

Positions 1–21 (MYGEWAAVNILMMSYVYLVQG) are cleaved as a signal peptide. A propeptide spanning residues 22-93 (FSIEHRAVKD…SRSTSHRSTR (72 aa)) is cleaved from the precursor. 3 cysteine pairs are disulfide-bonded: Cys-116–Cys-158, Cys-147–Cys-194, and Cys-151–Cys-196. Residues Asn-160 and Asn-190 are each glycosylated (N-linked (GlcNAc...) asparagine). Residues 211-326 (SIQIPEEDQC…CRSMVFSLSP (116 aa)) constitute a propeptide that is removed on maturation. One copy of the 1; approximate repeat lies at 227-242 (CPVDMLWDNTKCKCVL). Residues 227 to 317 (CPVDMLWDNT…KHKMFHPDTC (91 aa)) form a 4 X 16 AA repeats of C-X(10)-C-X-C-X(1,3)-C region. 2 consecutive repeat copies span residues 263–278 (CGPH…ECVC) and 282–298 (CPGD…CFEC). N-linked (GlcNAc...) asparagine glycosylation is present at Asn-292. The stretch at 306 to 317 (CQKHKMFHPDTC) is one 4; truncated repeat.

Belongs to the PDGF/VEGF growth factor family. As to quaternary structure, homodimer; non-covalent and antiparallel. In terms of processing, undergoes a complex proteolytic maturation which generates a variety of processed secreted forms with increased activity toward VEGFR-3 and VEGFR-2. VEGF-D first form an antiparallel homodimer linked by disulfide bonds before secretion. The fully processed VEGF-D is composed mostly of two VEGF homology domains (VHDs) bound by non-covalent interactions. As to expression, highly expressed in the spleen, kidney, lung, tongue, ovary and mammary gland.

It is found in the secreted. Functionally, growth factor active in angiogenesis, lymphangiogenesis and endothelial cell growth, stimulating their proliferation and migration and also has effects on the permeability of blood vessels. May function in the formation of the venous and lymphatic vascular systems during embryogenesis, and also in the maintenance of differentiated lymphatic endothelium in adults. Binds and activates VEGFR-3 (Flt4) receptor. This is Vascular endothelial growth factor D from Rattus norvegicus (Rat).